The chain runs to 529 residues: MSSEKMPIETLQADEHRFAIILGAGAAGIIQGCTFIREKTLPLEEFQILERQSAFGGVWWKNTYPGAACDIPSHEYQISFALNPYWSRTFAPQPEIQKYFEDVALQYELHKSTTFNTEIVEAKWDDSRLLWLVETTDLTTGDTKLWSCHVLIGALGAFTVPKKAPVKNVDAFKGEEWHSVDWPKNANLKGKTVAVIGTGPSACQFIPNIYPEVKSLIVYQRSPGHVLPRNDVVVGSLTKWMFAHIPFLMRFNRWFWMKKDEILRPRLFTVGSWLQKIVISMTRNHLYKQIKDDTLRRKLESKDVFGCKRPLMLSDYYPIFNNDNVELVTDSVTELTENGIKSRNTDTGEEMERETDVLIWGTGYNPVDFGLPVPTKGRSGQLLCDKYQPELFSLYGVAVDDFPNYFNFLGPNSSSFETSVMELFELQAHHNSIATEYLFQKNVGTFRYAIMPKEERVRSWTLSLRPGQAKLPPANPNCKSYYRSKIGHVYRYPYPYWQYKALIAKLDFKRDWVLLQQRIGQKEVKVLEF.

FAD contacts are provided by residues 58-61, 70-71, and Tyr-76; these read VWWK and DI. 68 to 70 is a binding site for NADP(+); sequence ACD. NADP(+)-binding positions include 198–204 and 221–222; these read TGPSACQ and RS.

The protein belongs to the FAD-binding monooxygenase family. It depends on FAD as a cofactor.

The protein operates within polyketide biosynthesis. In terms of biological role, FAD-binding monooxygenase; part of the gene cluster A that mediates the biosynthesis of botcinic acid and its botcinin derivatives, acetate-derived polyketides that contribute to virulence when combined with the sesquiterpene botrydial. Botcinic acid and its derivatives have been shown to induce chlorosis and necrosis during host plant infection, but also have antifungal activities. Two polyketide synthases, BOA6 and BOA9, are involved in the biosynthesis of botcinins. BOA6 mediates the formation of the per-methylated tetraketide core by condensation of four units of malonyl-CoA with one unit of acetyl-CoA, which would be methylated in activated methylene groups to yield a bicyclic acid intermediate that could then either be converted to botrylactone derivatives or lose the starter acetate unit through a retro-Claisen type C-C bond cleavage to yield botcinin derivatives. The second polyketide synthase, BOA9, is probably required for the biosynthesis of the tetraketide side chain of botcinins. The methyltransferase (MT) domain within BOA6 is probably responsible for the incorporation of four methyl groups. The trans-enoyl reductase BOA5 might take over the enoyl reductase function of BOA6 that misses an ER domain. The monooxygenases BOA2, BOA3 and BOA4 might be involved in further hydroxylations at C4, C5 and C8, whereas BOA7, close to BOA9, could potentially be involved in the hydroxylation at C4 in the side chain of botcinins. In Botryotinia fuckeliana (strain B05.10) (Noble rot fungus), this protein is FAD-binding monooxygenase BOA2.